The primary structure comprises 647 residues: Transcriptional repressor XBP1 (647 aa).

Polar residues-rich tracts occupy residues 138-148 (SNKTPVSASPT) and 156-170 (STAS…LTKN). Disordered stretches follow at residues 138-170 (SNKT…LTKN) and 264-295 (LLSS…STSS). Residues 264–282 (LLSSSTSSPPKRRTSTGST) show a composition bias toward low complexity. Positions 282–395 (TFLDANASSS…PDFPKDCESW (114 aa)) constitute an HTH APSES-type domain. Residues 318–339 (CQSYKDFLINELGPDQIDLPNL) constitute a DNA-binding region (H-T-H motif). Residues 425–434 (TNFTSTAVAR) show a composition bias toward low complexity. Disordered stretches follow at residues 425-455 (TNFT…HSKA), 485-508 (KKNS…GPRD), and 612-647 (QNQR…NSKQ). Residues 435-445 (PRQKPRPRPRQ) are compositionally biased toward basic residues. Positions 493–502 (SSTYTSQTSS) are enriched in low complexity.

The protein localises to the nucleus. Its function is as follows. Transcriptional repressor which binds to the consensus sequence 5'-GCCTCGA[G/A]G[C/A]-3'. Represses CLN1 transcription. In Saccharomyces cerevisiae (strain ATCC 204508 / S288c) (Baker's yeast), this protein is Transcriptional repressor XBP1 (XBP1).